A 284-amino-acid polypeptide reads, in one-letter code: RNase adapter protein RapZ (284 aa).

Gly-8–Ser-15 is an ATP binding site. Asp-56 to Asn-59 lines the GTP pocket. The segment at Arg-266–Pro-284 is RNA-binding.

The protein belongs to the RapZ-like family. RapZ subfamily. As to quaternary structure, homotrimer.

Functionally, modulates the synthesis of GlmS, by affecting the processing and stability of the regulatory small RNA GlmZ. When glucosamine-6-phosphate (GlcN6P) concentrations are high in the cell, RapZ binds GlmZ and targets it to cleavage by RNase E. Consequently, GlmZ is inactivated and unable to activate GlmS synthesis. Under low GlcN6P concentrations, RapZ is sequestered and inactivated by an other regulatory small RNA, GlmY, preventing GlmZ degradation and leading to synthesis of GlmS. This is RNase adapter protein RapZ from Shigella dysenteriae serotype 1 (strain Sd197).